Consider the following 305-residue polypeptide: Succinate--CoA ligase [ADP-forming] subunit alpha (305 aa).

CoA-binding positions include 17–20 (TGKE), K43, and 96–98 (ITE). Residue Y161 coordinates substrate. The active-site Tele-phosphohistidine intermediate is H249.

Belongs to the succinate/malate CoA ligase alpha subunit family. In terms of assembly, heterotetramer of two alpha and two beta subunits.

It catalyses the reaction succinate + ATP + CoA = succinyl-CoA + ADP + phosphate. The enzyme catalyses GTP + succinate + CoA = succinyl-CoA + GDP + phosphate. Its pathway is carbohydrate metabolism; tricarboxylic acid cycle; succinate from succinyl-CoA (ligase route): step 1/1. Functionally, succinyl-CoA synthetase functions in the citric acid cycle (TCA), coupling the hydrolysis of succinyl-CoA to the synthesis of either ATP or GTP and thus represents the only step of substrate-level phosphorylation in the TCA. The alpha subunit of the enzyme binds the substrates coenzyme A and phosphate, while succinate binding and nucleotide specificity is provided by the beta subunit. In Aquifex aeolicus (strain VF5), this protein is Succinate--CoA ligase [ADP-forming] subunit alpha.